A 248-amino-acid polypeptide reads, in one-letter code: Triosephosphate isomerase (248 aa).

9–11 contributes to the substrate binding site; the sequence is NWK. The active-site Electrophile is H92. Catalysis depends on E164, which acts as the Proton acceptor. Residues G170, S209, and 230–231 contribute to the substrate site; that span reads GG.

This sequence belongs to the triosephosphate isomerase family. Homodimer.

The protein resides in the cytoplasm. It carries out the reaction D-glyceraldehyde 3-phosphate = dihydroxyacetone phosphate. Its pathway is carbohydrate biosynthesis; gluconeogenesis. It functions in the pathway carbohydrate degradation; glycolysis; D-glyceraldehyde 3-phosphate from glycerone phosphate: step 1/1. Its function is as follows. Involved in the gluconeogenesis. Catalyzes stereospecifically the conversion of dihydroxyacetone phosphate (DHAP) to D-glyceraldehyde-3-phosphate (G3P). This is Triosephosphate isomerase from Thiobacillus denitrificans (strain ATCC 25259 / T1).